Here is a 125-residue protein sequence, read N- to C-terminus: Small ribosomal subunit protein uS12 (125 aa).

Aspartate 89 is subject to 3-methylthioaspartic acid. Residues 105–125 form a disordered region; that stretch reads AGVKDRKQARSKYGAKRPKAA. Residues 113 to 125 are compositionally biased toward basic residues; it reads ARSKYGAKRPKAA.

The protein belongs to the universal ribosomal protein uS12 family. As to quaternary structure, part of the 30S ribosomal subunit. Contacts proteins S8 and S17. May interact with IF1 in the 30S initiation complex.

Its function is as follows. With S4 and S5 plays an important role in translational accuracy. In terms of biological role, interacts with and stabilizes bases of the 16S rRNA that are involved in tRNA selection in the A site and with the mRNA backbone. Located at the interface of the 30S and 50S subunits, it traverses the body of the 30S subunit contacting proteins on the other side and probably holding the rRNA structure together. The combined cluster of proteins S8, S12 and S17 appears to hold together the shoulder and platform of the 30S subunit. This chain is Small ribosomal subunit protein uS12, found in Methylobacillus flagellatus (strain ATCC 51484 / DSM 6875 / VKM B-1610 / KT).